A 134-amino-acid polypeptide reads, in one-letter code: Protein TraK (134 aa).

Residues 74–134 (HIKAKPADVP…NPTPDKKDLL (61 aa)) form a disordered region. Residues 83 to 92 (PAPQAKAAEP) are compositionally biased toward low complexity. Positions 99–112 (PEPRRPKQGGKAEK) are enriched in basic and acidic residues.

The chain is Protein TraK (traK) from Escherichia coli.